Here is a 214-residue protein sequence, read N- to C-terminus: Probable transaldolase (214 aa).

The Schiff-base intermediate with substrate role is filled by lysine 83.

It belongs to the transaldolase family. Type 3B subfamily.

The protein localises to the cytoplasm. The enzyme catalyses D-sedoheptulose 7-phosphate + D-glyceraldehyde 3-phosphate = D-erythrose 4-phosphate + beta-D-fructose 6-phosphate. It functions in the pathway carbohydrate degradation; pentose phosphate pathway; D-glyceraldehyde 3-phosphate and beta-D-fructose 6-phosphate from D-ribose 5-phosphate and D-xylulose 5-phosphate (non-oxidative stage): step 2/3. Functionally, transaldolase is important for the balance of metabolites in the pentose-phosphate pathway. The sequence is that of Probable transaldolase from Streptococcus equi subsp. zooepidemicus (strain MGCS10565).